The following is a 402-amino-acid chain: Protein rds1 (402 aa).

In terms of biological role, may have a function in stress-related responses of the cell. This chain is Protein rds1 (rds1), found in Schizosaccharomyces pombe (strain 972 / ATCC 24843) (Fission yeast).